A 497-amino-acid chain; its full sequence is 4,4'-diaponeurosporene oxygenase (497 aa).

7-19 contributes to the FAD binding site; sequence VIGGGLGGISAAI.

It belongs to the carotenoid/retinoid oxidoreductase family. CrtP subfamily. It depends on FAD as a cofactor.

It carries out the reaction all-trans-4,4'-diaponeurosporene + 2 AH2 + 2 O2 = 4,4'-diaponeurosporenal + 2 A + 3 H2O. The protein operates within carotenoid biosynthesis; staphyloxanthin biosynthesis; staphyloxanthin from farnesyl diphosphate: step 3/5. In terms of biological role, involved in the biosynthesis of the yellow-orange carotenoid staphyloxanthin, which plays a role in the virulence via its protective function against oxidative stress. Catalyzes the oxidation of the terminal methyl side group of 4,4'-diaponeurosporene to form 4,4'-diaponeurosporen-4-al. In Staphylococcus aureus (strain MW2), this protein is 4,4'-diaponeurosporene oxygenase.